A 111-amino-acid polypeptide reads, in one-letter code: uncharacterized protein (111 aa).

Its subcellular location is the mitochondrion. This is an uncharacterized protein from Arabidopsis thaliana (Mouse-ear cress).